Reading from the N-terminus, the 650-residue chain is Acetoacetyl-coenzyme A synthetase (650 aa).

Position 199–202 (199–202 (YNGK)) interacts with CoA. Residues 392-394 (GSP), Asp-504, Arg-519, and Arg-530 contribute to the ATP site. Val-546 contacts Mg(2+). Arg-587 is a binding site for CoA. Lys-612 carries the N6-acetyllysine modification.

It belongs to the ATP-dependent AMP-binding enzyme family. It depends on Mg(2+) as a cofactor. Post-translationally, acetylated. Deacetylation by the SIR2-homolog deacetylase activates the enzyme.

The enzyme catalyses acetoacetate + ATP + CoA = acetoacetyl-CoA + AMP + diphosphate. Its pathway is biopolymer metabolism; poly-(R)-3-hydroxybutanoate degradation. Catalyzes the conversion of acetoacetate into acetoacetyl-CoA. Is involved in poly-3-hydroxybutyrate (PHB) degradation, which allows growth of R.meliloti on PHB cycle intermediates. The sequence is that of Acetoacetyl-coenzyme A synthetase from Rhizobium meliloti (strain 1021) (Ensifer meliloti).